The following is a 419-amino-acid chain: L-rhamnose isomerase (419 aa).

Residues histidine 262, aspartate 294, and aspartate 296 each coordinate Mn(2+).

Belongs to the rhamnose isomerase family. Homotetramer. It depends on Mn(2+) as a cofactor.

It is found in the cytoplasm. It carries out the reaction L-rhamnopyranose = L-rhamnulose. Its pathway is carbohydrate degradation; L-rhamnose degradation; glycerone phosphate from L-rhamnose: step 1/3. Catalyzes the interconversion of L-rhamnose and L-rhamnulose. The chain is L-rhamnose isomerase from Salmonella newport (strain SL254).